A 228-amino-acid polypeptide reads, in one-letter code: Ribosomal RNA small subunit methyltransferase G (228 aa).

Residues G89, L94, 140 to 141 (VE), and R159 each bind S-adenosyl-L-methionine.

The protein belongs to the methyltransferase superfamily. RNA methyltransferase RsmG family.

It localises to the cytoplasm. It catalyses the reaction guanosine(527) in 16S rRNA + S-adenosyl-L-methionine = N(7)-methylguanosine(527) in 16S rRNA + S-adenosyl-L-homocysteine. Specifically methylates the N7 position of guanine in position 527 of 16S rRNA. The polypeptide is Ribosomal RNA small subunit methyltransferase G (Burkholderia cenocepacia (strain HI2424)).